We begin with the raw amino-acid sequence, 551 residues long: MSEKSREEEKLSFKEQILRDLEKVKGYDEVLKEDEAVVRTPANEPSAEELMADSLSTVEEIMRKAPTVPTHPSQGVPASPADEIQRETPGVPSHPSQDVPSSPAEESGSRPGPGPVRPKKLEREYNETPTRVAVSYTTAEKKAEQAGPETPTPATETVDIIRDTSRRSRREGAKPAKPKKEKKSHVKAFVISFLVFLALLSAGGYFGYQYVLDSLLPIDANSKKYVTVGIPEGSNVQEIGTTLEKAGLVKHGLIFSFYAKYKNYTDLKAGYYNLQKSMSTEDLLKELQKGGTDEPQEPVLATLTIPEGYTLDQIAQTVGQLQGDFKESLTAEAFLAKVQDETFISQAVAKYPTLLESLPVKDSGARYRLEGYLFPATYSIKESTTIESLIDEMLAAMDKNLSLYYSTIKSKNLTVNELLTIASLVEKEGAKTEDRKLIAGVFYNRLNRDMPLQSNIAILYAQGKLGQNISLAEDVAIDTNIDSPYNVYKNVGLMPGPVDSPSLDAIESSINQTKSDNLYFVADVTEGKVYYANNQEDHDRNVAEHVNSKLN.

Topologically, residues 1-187 (MSEKSREEEK…PKKEKKSHVK (187 aa)) are cytoplasmic. Residues 38–180 (VRTPANEPSA…EGAKPAKPKK (143 aa)) are disordered. Composition is skewed to low complexity over residues 100–110 (PSSPAEESGSR) and 145–157 (QAGP…ATET). Positions 159 to 174 (DIIRDTSRRSRREGAK) are enriched in basic and acidic residues. A helical transmembrane segment spans residues 188-208 (AFVISFLVFLALLSAGGYFGY). Over 209 to 551 (QYVLDSLLPI…VAEHVNSKLN (343 aa)) the chain is Extracellular.

It belongs to the transglycosylase MltG family. As to quaternary structure, interacts with RodZ. Interacts with MreC in the elongasome; interaction is strongly reduced when the 90 C-terminal residues of MreC are missing. Interacts with KhpB (also called EloR/Jag) via MltG's N-terminus, suggesting the N-terminus of MltG is cytoplasmic.

The protein localises to the cell membrane. The enzyme catalyses a peptidoglycan chain = a peptidoglycan chain with N-acetyl-1,6-anhydromuramyl-[peptide] at the reducing end + a peptidoglycan chain with N-acetylglucosamine at the non-reducing end.. Functions as a peptidoglycan terminase that cleaves nascent peptidoglycan strands endolytically to terminate their elongation. Functionally, mutations in this gene suppress deletion of PBP2b (penA); truncation at residue 168, undefined changes between residue Ile-447 and Ala-505, and mutation of Ala-505 suppress the penA deletion. Probably part of the elongasome which synthesizes peripheral peptidoglycan. The sequence is that of Endolytic murein transglycosylase from Streptococcus pneumoniae (strain ATCC BAA-255 / R6).